The sequence spans 346 residues: Putative D-alanine--D-lactate ligase (346 aa).

In terms of domain architecture, ATP-grasp spans 137 to 338 (YVVARSAGIA…LSEVIDRTLS (202 aa)). 163–216 (RLTYPVFVKPARSGSSFGVSKVCRPEDLATAVESARRYDTKVLIEAAVVGSEVG) contributes to the ATP binding site. Mg(2+)-binding residues include aspartate 292, glutamate 305, and asparagine 307.

The protein belongs to the D-alanine--D-alanine ligase family. The cofactor is Mg(2+). Mn(2+) serves as cofactor.

It is found in the cell membrane. Its function is as follows. Required for resistance to glycopeptides antibiotics. D-Ala--D-Ala ligase of altered specificity which catalyzes ester bond formation between D-Ala and various D-hydroxy acids; producing a peptidoglycan which does not terminate by D-alanine but by D-lactate, thus preventing vancomycin binding. The sequence is that of Putative D-alanine--D-lactate ligase from Streptomyces coelicolor (strain ATCC BAA-471 / A3(2) / M145).